The chain runs to 440 residues: Ferredoxin--NADP reductase (440 aa).

The 59-residue stretch at 17–75 (SRVFVYEVVGMRQNEETDQTNYPIRKSGSVFIRVPYNRMNQEMQRITRLGGKIVTIQTV) folds into the CpcD-like domain. A disordered region spans residues 99–142 (KSEGNGKATPVKTDSGAKAFAKPPAEEQLKKKDNKGNTMTQAKA). Basic and acidic residues predominate over residues 122–133 (PAEEQLKKKDNK). Positions 155 to 279 (NAPFIGKVIS…TGPVGKEMLL (125 aa)) constitute an FAD-binding FR-type domain. FAD-binding positions include 214 to 217 (RLYS), 235 to 237 (CVR), Tyr-241, 253 to 255 (VCS), and Thr-294. Residues Ser-217 and Arg-237 each contribute to the NADP(+) site. Residues Thr-294, 330 to 331 (VP), 360 to 361 (SR), 370 to 374 (RMYIQ), 399 to 400 (GL), and Glu-438 each bind NADP(+).

It belongs to the ferredoxin--NADP reductase type 1 family. FAD serves as cofactor.

Its subcellular location is the cellular thylakoid membrane. The enzyme catalyses 2 reduced [2Fe-2S]-[ferredoxin] + NADP(+) + H(+) = 2 oxidized [2Fe-2S]-[ferredoxin] + NADPH. This chain is Ferredoxin--NADP reductase (petH), found in Nostoc sp. (strain ATCC 29151 / PCC 7119) (Anabaena sp.).